A 551-amino-acid chain; its full sequence is Interferon-induced, double-stranded RNA-activated protein kinase (551 aa).

Ala2 carries the post-translational modification N-acetylalanine. The interval Ala2 to Gly180 is (Microbial infection) Interaction with HCV NS5A. The 69-residue stretch at Phe9–Lys77 folds into the DRBM 1 domain. Lys69 participates in a covalent cross-link: Glycyl lysine isopeptide (Lys-Gly) (interchain with G-Cter in ISG15). Ser83 carries the phosphoserine modification. A phosphothreonine; by autocatalysis mark is found at Thr88, Thr89, and Thr90. One can recognise a DRBM 2 domain in the interval Asn100–Ser167. Tyr101 is modified (phosphotyrosine; by autocatalysis). Lys159 is covalently cross-linked (Glycyl lysine isopeptide (Lys-Gly) (interchain with G-Cter in ISG15)). Tyr162 carries the phosphotyrosine; by autocatalysis modification. Over residues Ser202–Ile215 the composition is skewed to polar residues. The tract at residues Ser202–Leu222 is disordered. At Ser242 the chain carries Phosphoserine; by autocatalysis. Phosphothreonine; by autocatalysis occurs at positions 255 and 258. The segment at Asp266–Leu362 is dimerization. The interaction with TRAF5 stretch occupies residues Asp266–Cys551. The region spanning Phe267–Val538 is the Protein kinase domain. Ile273–Val281 contributes to the ATP binding site. The residue at position 293 (Tyr293) is a Phosphotyrosine; by autocatalysis. Lys296 is a binding site for ATP. 2 tandem repeats follow at residues Asp331–Ser343 and Asp345–Ser357. The tract at residues Asp331–Ser357 is 2 X 13 AA approximate repeats. The segment at Glu379–Thr496 is interaction with EIF2S1/EIF-2ALPHA. Asp414 (proton acceptor) is an active-site residue. Mg(2+) is bound at residue Asp432. Thr446 and Thr451 each carry phosphothreonine; by autocatalysis. Residues Ser456 and Ser542 each carry the phosphoserine modification.

It belongs to the protein kinase superfamily. Ser/Thr protein kinase family. GCN2 subfamily. Homodimer. Interacts with STRBP. Interacts with DNAJC3. Forms a complex with FANCA, FANCC, FANCG and HSP70. Interacts with ADAR/ADAR1. Interacts with IRS1. The inactive form interacts with NCK1 and GSN. Interacts (via the kinase catalytic domain) with STAT3 (via SH2 domain), TRAF2 (C-terminus), TRAF5 (C-terminus) and TRAF6 (C-terminus). Interacts with MAP2K6, IKBKB/IKKB, NPM1, TARBP2, NLRP1, NLRP3, NLRC4 and AIM2. Interacts (via DRBM 1 domain) with DUS2L (via DRBM domain). Interacts with DHX9 (via N-terminus) and this interaction is dependent upon activation of the kinase. Interacts with EIF2S1/EIF-2ALPHA; this interaction induces a conformational change in EIF2S1 and its phosphorylation by EIF2AK2. As to quaternary structure, (Microbial infection) Interacts with human cytomegalovirus (HCMV) TRS1; this interaction retains EIF2AK2 to the nucleus and prevents its activation. In terms of assembly, (Microbial infection) Interacts with vaccinia virus protein K3 (K3L); this interaction inhibits EIF2AK2. (Microbial infection) Interacts with human herpes simplex virus 1 (HHV-1) protein US11 in an RNA-dependent manner. As to quaternary structure, (Microbial infection) The inactive form interacts with Toscana virus (TOS) NSS. In terms of assembly, (Microbial infection) Interacts with herpes virus 8 protein v-IRF2; this interaction inhibits EIF2AK2 activation. (Microbial infection) Interacts with vaccinia protein E3. As to quaternary structure, (Microbial infection) Interacts (via N-terminus) with Hepatitis C virus (HCV) mature core protein (via N-terminus); this interaction induces the autophosphorylation of EIF2AK2. In terms of assembly, (Microbial infection) Interacts with Hepatitis C virus (HCV) non-structural protein 5A (NS5A); this interaction leads to disruption of EIF2AK2 dimerization by NS5A. (Microbial infection) Interacts with Hepatitis C virus (HCV) envelope glycoprotein E2; this interaction inhibits EIF2AK2 and blocks its inhibitory effect on protein synthesis and cell growth. As to quaternary structure, (Microbial infection) Interacts with human respiratory syncytial virus (HRSV) nucleoprotein; this interaction inhibits EIF2AK2 phosphorylation of EIF2S1 and blocks EIF2AK2-mediated translation shutoff. In terms of assembly, (Microbial infection) Interacts with human herpesvirus 8 protein MTA/ORF57; this interaction inhibits stress granule formation. The cofactor is Mg(2+). Post-translationally, autophosphorylated on several Ser, Thr and Tyr residues. Autophosphorylation of Thr-451 is dependent on Thr-446 and is stimulated by dsRNA binding and dimerization. Autophosphorylation apparently leads to the activation of the kinase. Tyrosine autophosphorylation is essential for efficient dsRNA-binding, dimerization, and kinase activation. As to expression, highly expressed in thymus, spleen and bone marrow compared to non-hematopoietic tissues such as small intestine, liver, or kidney tissues. Colocalizes with GSK3B and TAU in the Alzheimer disease (AD) brain. Elevated levels seen in breast and colon carcinomas, and which correlates with tumor progression and invasiveness or risk of progression.

Its subcellular location is the cytoplasm. It is found in the nucleus. The protein localises to the perinuclear region. The enzyme catalyses L-seryl-[protein] + ATP = O-phospho-L-seryl-[protein] + ADP + H(+). The catalysed reaction is L-threonyl-[protein] + ATP = O-phospho-L-threonyl-[protein] + ADP + H(+). It catalyses the reaction L-tyrosyl-[protein] + ATP = O-phospho-L-tyrosyl-[protein] + ADP + H(+). With respect to regulation, initially produced in an inactive form and is activated by binding to viral dsRNA, which causes dimerization and autophosphorylation in the activation loop and stimulation of function. ISGylation can activate it in the absence of viral infection. Can also be activated by heparin, pro-inflammatory stimuli, growth factors, cytokines, oxidative stress and the cellular protein PRKRA. Activity is markedly stimulated by manganese ions. Activation is blocked by the viral components HIV-1 Tat protein and large amounts of HIV-1 trans-activation response (TAR) RNA element as well as by the cellular proteins TARBP2, DUS2L, NPM1, NCK1 and ADAR. Down-regulated by Toscana virus (TOS) and Rift valley fever virus (RVFV) NSS which promote its proteasomal degradation. Inhibited by vaccinia virus protein E3, probably via dsRNA sequestering. Functionally, IFN-induced dsRNA-dependent serine/threonine-protein kinase that phosphorylates the alpha subunit of eukaryotic translation initiation factor 2 (EIF2S1/eIF-2-alpha) and plays a key role in the innate immune response to viral infection. Inhibits viral replication via the integrated stress response (ISR): EIF2S1/eIF-2-alpha phosphorylation in response to viral infection converts EIF2S1/eIF-2-alpha in a global protein synthesis inhibitor, resulting to a shutdown of cellular and viral protein synthesis, while concomitantly initiating the preferential translation of ISR-specific mRNAs, such as the transcriptional activator ATF4. Exerts its antiviral activity on a wide range of DNA and RNA viruses including hepatitis C virus (HCV), hepatitis B virus (HBV), measles virus (MV) and herpes simplex virus 1 (HHV-1). Also involved in the regulation of signal transduction, apoptosis, cell proliferation and differentiation: phosphorylates other substrates including p53/TP53, PPP2R5A, DHX9, ILF3, IRS1 and the HHV-1 viral protein US11. In addition to serine/threonine-protein kinase activity, also has tyrosine-protein kinase activity and phosphorylates CDK1 at 'Tyr-4' upon DNA damage, facilitating its ubiquitination and proteasomal degradation. Either as an adapter protein and/or via its kinase activity, can regulate various signaling pathways (p38 MAP kinase, NF-kappa-B and insulin signaling pathways) and transcription factors (JUN, STAT1, STAT3, IRF1, ATF3) involved in the expression of genes encoding pro-inflammatory cytokines and IFNs. Activates the NF-kappa-B pathway via interaction with IKBKB and TRAF family of proteins and activates the p38 MAP kinase pathway via interaction with MAP2K6. Can act as both a positive and negative regulator of the insulin signaling pathway (ISP). Negatively regulates ISP by inducing the inhibitory phosphorylation of insulin receptor substrate 1 (IRS1) at 'Ser-312' and positively regulates ISP via phosphorylation of PPP2R5A which activates FOXO1, which in turn up-regulates the expression of insulin receptor substrate 2 (IRS2). Can regulate NLRP3 inflammasome assembly and the activation of NLRP3, NLRP1, AIM2 and NLRC4 inflammasomes. Plays a role in the regulation of the cytoskeleton by binding to gelsolin (GSN), sequestering the protein in an inactive conformation away from actin. In Homo sapiens (Human), this protein is Interferon-induced, double-stranded RNA-activated protein kinase (EIF2AK2).